We begin with the raw amino-acid sequence, 353 residues long: Purine nucleoside phosphorylase (353 aa).

Over residues 1 to 16 (MSKFSYLQNGKASTNG) the composition is skewed to polar residues. The segment at 1-42 (MSKFSYLQNGKASTNGVPHANGHHQQHQNGHSNGVARNGGTA) is disordered. Phosphate-binding positions include Ser98, His129, 149–151 (RFH), and Ala181. A purine D-ribonucleoside is bound at residue Glu266. A phosphate-binding site is contributed by Ser285. A purine D-ribonucleoside is bound at residue Asn308.

This sequence belongs to the PNP/MTAP phosphorylase family. In terms of assembly, homotrimer.

It catalyses the reaction inosine + phosphate = alpha-D-ribose 1-phosphate + hypoxanthine. The catalysed reaction is guanosine + phosphate = alpha-D-ribose 1-phosphate + guanine. The enzyme catalyses 2'-deoxyguanosine + phosphate = 2-deoxy-alpha-D-ribose 1-phosphate + guanine. It carries out the reaction 2'-deoxyinosine + phosphate = 2-deoxy-alpha-D-ribose 1-phosphate + hypoxanthine. Its pathway is purine metabolism; purine nucleoside salvage. With respect to regulation, inhibited by 5'-deaza-1'-aza-2c-deoxy-1'-(9-methylene) immucillin-H (DADMe-ImmH). As part of the purine salvage pathway, catalyzes the phosphorolytic breakdown of the N-glycosidic bond in the beta-(deoxy)ribonucleoside molecules, with the formation of the corresponding free purine bases and pentose-1-phosphate. Preferentially acts on 2'-deoxyinosine and inosine, and to a lesser extent on 2'-deoxyguanosine and guanosine. Has no activity towards adenosine or 2'-deoxyadenosine. This Anopheles gambiae (African malaria mosquito) protein is Purine nucleoside phosphorylase.